Consider the following 500-residue polypeptide: NAD(P)H-quinone oxidoreductase chain 4, chloroplastic (500 aa).

14 helical membrane-spanning segments follow: residues 4-24 (FPWLTIIVVLPIFAGSLIFFL), 35-55 (YTICICMLELLLTTYAFCYHF), 87-107 (LGPVLLTGFITTLATLAAWPV), 113-130 (LFHFLMLAMYSGQIGSFS), 134-154 (LLLFFIMWELELIPVYLLLSM), 167-187 (FILYTAGGSIFLLMGVLGVGL), 207-227 (VALEIIFYIGFLIAFAVKLPI), 242-262 (HYSTCMLLAGILLKMGAYGLI), 272-292 (AHSIFSPWLMVVGTIQIIYAA), 305-325 (IAYSSVSHMGFILIGIASITD), 330-350 (GAILQIISHGFIGAALFFLAG), 386-406 (LALPGMSGFVAEVLVFLGIIT), 416-436 (IAITFVMAIGMILTPIYLLSM), and 462-482 (LFVSISIFIPVIGIGMYPDFV).

Belongs to the complex I subunit 4 family.

It localises to the plastid. Its subcellular location is the chloroplast thylakoid membrane. The enzyme catalyses a plastoquinone + NADH + (n+1) H(+)(in) = a plastoquinol + NAD(+) + n H(+)(out). The catalysed reaction is a plastoquinone + NADPH + (n+1) H(+)(in) = a plastoquinol + NADP(+) + n H(+)(out). This Helianthus annuus (Common sunflower) protein is NAD(P)H-quinone oxidoreductase chain 4, chloroplastic.